Consider the following 168-residue polypeptide: UPF0303 protein YE1367 (168 aa).

This sequence belongs to the UPF0303 family.

In Yersinia enterocolitica serotype O:8 / biotype 1B (strain NCTC 13174 / 8081), this protein is UPF0303 protein YE1367.